We begin with the raw amino-acid sequence, 496 residues long: Trimethylamine methyltransferase MttB (496 aa).

Pyrrolysine 331 is a non-standard amino acid (pyrrolysine).

The protein belongs to the trimethylamine methyltransferase family.

It carries out the reaction Co(I)-[trimethylamine-specific corrinoid protein] + trimethylamine + H(+) = methyl-Co(III)-[trimethylamine-specific corrinoid protein] + dimethylamine. Catalyzes the transfer of a methyl group from trimethylamine to the corrinoid cofactor of MttC. This chain is Trimethylamine methyltransferase MttB, found in Desulfitobacterium hafniense (strain DSM 10664 / DCB-2).